Reading from the N-terminus, the 252-residue chain is Imidazole glycerol phosphate synthase subunit HisF (252 aa).

Catalysis depends on residues aspartate 11 and aspartate 130.

It belongs to the HisA/HisF family. In terms of assembly, heterodimer of HisH and HisF.

It is found in the cytoplasm. It catalyses the reaction 5-[(5-phospho-1-deoxy-D-ribulos-1-ylimino)methylamino]-1-(5-phospho-beta-D-ribosyl)imidazole-4-carboxamide + L-glutamine = D-erythro-1-(imidazol-4-yl)glycerol 3-phosphate + 5-amino-1-(5-phospho-beta-D-ribosyl)imidazole-4-carboxamide + L-glutamate + H(+). It participates in amino-acid biosynthesis; L-histidine biosynthesis; L-histidine from 5-phospho-alpha-D-ribose 1-diphosphate: step 5/9. IGPS catalyzes the conversion of PRFAR and glutamine to IGP, AICAR and glutamate. The HisF subunit catalyzes the cyclization activity that produces IGP and AICAR from PRFAR using the ammonia provided by the HisH subunit. In Streptococcus sanguinis (strain SK36), this protein is Imidazole glycerol phosphate synthase subunit HisF.